Consider the following 488-residue polypeptide: Thiamine transporter 2 (488 aa).

At 1–8 (MDSSCRTP) the chain is on the cytoplasmic side. A helical membrane pass occupies residues 9–29 (PSNSWVYPTVILCLFGFFSMF). At 30-54 (RPSEAFLIPFLSEPSKNLTSPEMTN) the chain is on the extracellular side. N-linked (GlcNAc...) asparagine glycosylation occurs at N46. A helical transmembrane segment spans residues 55–75 (EILPVWTYSYLATLPPVFVLT). Topologically, residues 76–82 (DYLRYKP) are cytoplasmic. Residues 83–103 (VIMLHVVAFATSYLFLLFGQG) form a helical membrane-spanning segment. The Extracellular segment spans residues 104 to 111 (VMLMQTAE). A helical transmembrane segment spans residues 112-132 (FFFGVVSATEIAYFAYIYSMV). Over 133–145 (SPEHYQKVSSYCR) the chain is Cytoplasmic. The helical transmembrane segment at 146–166 (SITLVAYTAGSVLAQLLVSLT) threads the bilayer. Over 167 to 172 (NLPYSS) the chain is Extracellular. A helical transmembrane segment spans residues 173–193 (LFYISLACVSVAFFFSLFLPM). Residues 194-276 (PKKSMFFHAK…YSSKHLVYWS (83 aa)) are Cytoplasmic-facing. The chain crosses the membrane as a helical span at residues 277–297 (LWWAFATAGYNQILNYVQVLW). Residues 298–310 (EHKAPSQDSSIYN) lie on the Extracellular side of the membrane. Residues 311 to 331 (GAVEAIATFGGALASFSVGYL) traverse the membrane as a helical segment. The Cytoplasmic portion of the chain corresponds to 332 to 335 (KVNW). A helical transmembrane segment spans residues 336–356 (DLLGELGLAVFSAVIAGSLFL). Topologically, residues 357–369 (MNYSRSIWVCYAG) are extracellular. N358 is a glycosylation site (N-linked (GlcNAc...) asparagine). A helical transmembrane segment spans residues 370 to 390 (YLLVKSSYSFLITIAVFQIAV). Residues 391 to 399 (NLSLERYAL) are Cytoplasmic-facing. Residues 400–420 (VFGIDTFIALVIQTIMTMIVV) form a helical membrane-spanning segment. Topologically, residues 421–428 (DQRGLQLP) are extracellular. Residues 429 to 449 (VTTQFLVYGSYFAVIAGVFLM) traverse the membrane as a helical segment. Residues 450–488 (RSIYILCSAKCRKEVQNLATTRSPNEPHPQEPSNVSTKF) lie on the Cytoplasmic side of the membrane. Residues 469 to 488 (TTRSPNEPHPQEPSNVSTKF) form a disordered region.

The protein belongs to the reduced folate carrier (RFC) transporter (TC 2.A.48) family. In terms of tissue distribution, high expression in kidney, brain, lung and small intestine. Detected in pancreatic acinar cells (at protein level). Also expressed strongly in pancreatic islet cells.

It localises to the membrane. The catalysed reaction is thiamine(out) + H(+)(in) = thiamine(in) + H(+)(out). Functionally, high-affinity transporter for the intake of thiamine. Unlike the human ortholog, lacks H(+)-dependent pyridoxine transport activity due to an absence of seven critical amino-acids required for pyridoxine transport. The sequence is that of Thiamine transporter 2 (Slc19a3) from Mus musculus (Mouse).